The chain runs to 238 residues: Probable transcriptional regulatory protein VIBHAR_07036 (238 aa).

This sequence belongs to the TACO1 family.

It localises to the cytoplasm. In Vibrio campbellii (strain ATCC BAA-1116), this protein is Probable transcriptional regulatory protein VIBHAR_07036.